The following is a 678-amino-acid chain: Probable N-methylproline demethylase (678 aa).

FMN-binding positions include G59, Q102, R220, K299, and 321–322 (TR). [4Fe-4S] cluster is bound by residues C345, C351, and C363. Residues A396, E415, Q423, R433, and A460 each contribute to the FAD site.

The protein in the N-terminal section; belongs to the NADH:flavin oxidoreductase/NADH oxidase family. It depends on FMN as a cofactor. FAD serves as cofactor. [4Fe-4S] cluster is required as a cofactor.

The catalysed reaction is N-methyl-L-proline + NAD(+) + H2O = L-proline + formaldehyde + NADH + H(+). Its pathway is amine and polyamine degradation; stachydrine degradation. Its function is as follows. Possible NADH-dependent oxidase, may function as a demethylase that converts N-methylproline to proline. The polypeptide is Probable N-methylproline demethylase (Rhizobium meliloti (strain 1021) (Ensifer meliloti)).